Reading from the N-terminus, the 482-residue chain is Abscisic acid 8'-hydroxylase 2 (482 aa).

The helical transmembrane segment at 20–40 (PALITLTIVVVVVVLLFKWWL) threads the bilayer. Heme is bound at residue Cys431.

This sequence belongs to the cytochrome P450 family. It depends on heme as a cofactor. In terms of tissue distribution, mainly expressed in dry seeds. Lower expression in rosette leaves, flowers, siliques and stems. Not expressed in roots. Expressed in both endosperm and vascular tissues of embryo during the seed development and in cortex and endodermis in germinating embryo.

Its subcellular location is the membrane. The catalysed reaction is 2-cis-(+)-abscisate + reduced [NADPH--hemoprotein reductase] + O2 = (+)-8'-hydroxyabscisate + oxidized [NADPH--hemoprotein reductase] + H2O + H(+). The protein operates within plant hormone degradation; abscisic acid degradation. Involved in the oxidative degradation of abscisic acid, but not in the isomerization of the produced 8'-hydroxyabscisic acid (8'-OH-ABA) to (-)-phaseic acid (PA). Involved in the control of seed dormancy and germination. The sequence is that of Abscisic acid 8'-hydroxylase 2 (CYP707A2) from Arabidopsis thaliana (Mouse-ear cress).